We begin with the raw amino-acid sequence, 629 residues long: Forkhead box protein O1-B (629 aa).

Disordered stretches follow at residues 1–54 (MAEP…PEQG), 88–134 (CAHP…SRRN), 211–308 (SWWM…SPFL), and 359–397 (KNNT…QPQV). Positions 36 to 46 (QPGNSNTSSPA) are enriched in polar residues. 2 stretches are compositionally biased toward low complexity: residues 90–107 (HPQQ…THPQ) and 115–133 (PASG…SSRR). The fork-head DNA-binding region spans 136–230 (WGNMSYADLI…KSGKSPRRRA (95 aa)). A compositionally biased stretch (basic residues) spans 240 to 251 (TKSRGRAAKKKM). Composition is skewed to polar residues over residues 291 to 302 (TRASSDASTLSG), 359 to 377 (KNNT…SPLM), and 385 to 397 (SYTS…QPQV).

It is found in the cytoplasm. The protein localises to the nucleus. Functionally, transcription factor that regulates metabolic homeostasis in response to oxidative stress. Binds to the consensus sequence 5'-TT[G/A]TTTTG-3' and the related Daf-16 family binding element (DBE) with consensus sequence 5'-TT[G/A]TTTAC-3'. Main regulator of redox balance and osteoblast numbers and controls bone mass. Orchestrates the endocrine function of the skeleton in regulating glucose metabolism. May act as a positive regulator of apoptosis in cardiac smooth muscle cells as a result of its transcriptional activation of pro-apoptotic genes. This chain is Forkhead box protein O1-B (foxo1b), found in Danio rerio (Zebrafish).